Reading from the N-terminus, the 665-residue chain is Alpha-1,4-glucan:maltose-1-phosphate maltosyltransferase (665 aa).

Residues Lys255, Gln315, and Asp350 each contribute to the alpha-maltose 1-phosphate site. The active-site Nucleophile is the Asp386. Asn387 lines the alpha-maltose 1-phosphate pocket. The Proton donor role is filled by Glu415. Residue 526–527 coordinates alpha-maltose 1-phosphate; it reads KY.

The protein belongs to the glycosyl hydrolase 13 family. GlgE subfamily. Homodimer.

It carries out the reaction alpha-maltose 1-phosphate + [(1-&gt;4)-alpha-D-glucosyl](n) = [(1-&gt;4)-alpha-D-glucosyl](n+2) + phosphate. In terms of biological role, maltosyltransferase that uses maltose 1-phosphate (M1P) as the sugar donor to elongate linear or branched alpha-(1-&gt;4)-glucans. Is involved in a branched alpha-glucan biosynthetic pathway from trehalose, together with TreS, Mak and GlgB. In Myxococcus xanthus (strain DK1622), this protein is Alpha-1,4-glucan:maltose-1-phosphate maltosyltransferase.